A 324-amino-acid polypeptide reads, in one-letter code: uncharacterized protein (324 aa).

This is an uncharacterized protein from Saccharomyces cerevisiae (strain ATCC 204508 / S288c) (Baker's yeast).